Consider the following 423-residue polypeptide: tRNA(Ile)-lysidine synthase (423 aa).

18-23 serves as a coordination point for ATP; sequence SGGADS.

This sequence belongs to the tRNA(Ile)-lysidine synthase family.

Its subcellular location is the cytoplasm. It carries out the reaction cytidine(34) in tRNA(Ile2) + L-lysine + ATP = lysidine(34) in tRNA(Ile2) + AMP + diphosphate + H(+). Functionally, ligates lysine onto the cytidine present at position 34 of the AUA codon-specific tRNA(Ile) that contains the anticodon CAU, in an ATP-dependent manner. Cytidine is converted to lysidine, thus changing the amino acid specificity of the tRNA from methionine to isoleucine. The chain is tRNA(Ile)-lysidine synthase from Aromatoleum aromaticum (strain DSM 19018 / LMG 30748 / EbN1) (Azoarcus sp. (strain EbN1)).